The primary structure comprises 315 residues: Voltage-dependent calcium channel gamma-3 subunit (315 aa).

Helical transmembrane passes span 8–28 (IQML…TIAV), 104–124 (SSVF…CVAA), 135–155 (ILSA…GIIV), and 181–201 (FGAF…HIYI). Residues 232 to 253 (RRRSSSRSTEPRSRDLSPISKG) are disordered. At S248 the chain carries Phosphoserine.

It belongs to the PMP-22/EMP/MP20 family. CACNG subfamily. As to quaternary structure, the L-type calcium channel is composed of five subunits: alpha-1, alpha-2/delta, beta and gamma. Acts as an auxiliary subunit for AMPA-selective glutamate receptors (AMPARs). Found in a complex with GRIA1, GRIA2, GRIA3, GRIA4, CNIH2, CNIH3, CACNG2, CACNG4, CACNG5, CACNG7 and CACNG8. Interacts with AP4M1 and GRIA1; associates GRIA1 with the adaptor protein complex 4 (AP-4) to target GRIA1 to the somatodendritic compartment of neurons.

The protein resides in the membrane. In terms of biological role, regulates the trafficking to the somatodendritic compartment and gating properties of AMPA-selective glutamate receptors (AMPARs). Promotes their targeting to the cell membrane and synapses and modulates their gating properties by slowing their rates of activation, deactivation and desensitization. Does not show subunit-specific AMPA receptor regulation and regulates all AMPAR subunits. Thought to stabilize the calcium channel in an inactivated (closed) state. This is Voltage-dependent calcium channel gamma-3 subunit (Cacng3) from Mus musculus (Mouse).